A 212-amino-acid polypeptide reads, in one-letter code: MIFMTNEIVNSTSTSQKLILASQSPRRRELLAQLGYQFSVQASDIDETVEKAETAYDYVLRLAKQKAQHVLDLLPEAERVYSYVLGSDTSVVFNGEILGKPDNEENCIDTLSLLSGNQHQVLTAIALVSHAGVKGQVITTEVTFKTLTKAEISAYWLTGEPQDKAGSYGIQGIAGQFVKTINGSYSAVVGLPLYETAQLLANAGFVGSIHTK.

Asp88 functions as the Proton acceptor in the catalytic mechanism.

Belongs to the Maf family. YhdE subfamily. It depends on a divalent metal cation as a cofactor.

Its subcellular location is the cytoplasm. It carries out the reaction dTTP + H2O = dTMP + diphosphate + H(+). The enzyme catalyses UTP + H2O = UMP + diphosphate + H(+). Nucleoside triphosphate pyrophosphatase that hydrolyzes dTTP and UTP. May have a dual role in cell division arrest and in preventing the incorporation of modified nucleotides into cellular nucleic acids. This Colwellia psychrerythraea (strain 34H / ATCC BAA-681) (Vibrio psychroerythus) protein is dTTP/UTP pyrophosphatase.